The sequence spans 257 residues: tRNA pseudouridine synthase A (257 aa).

The active-site Nucleophile is Asp-53. Tyr-111 serves as a coordination point for substrate.

The protein belongs to the tRNA pseudouridine synthase TruA family. In terms of assembly, homodimer.

It catalyses the reaction uridine(38/39/40) in tRNA = pseudouridine(38/39/40) in tRNA. Functionally, formation of pseudouridine at positions 38, 39 and 40 in the anticodon stem and loop of transfer RNAs. This is tRNA pseudouridine synthase A from Xanthomonas campestris pv. campestris (strain 8004).